The primary structure comprises 119 residues: Large ribosomal subunit protein uL22c (119 aa).

This sequence belongs to the universal ribosomal protein uL22 family. Part of the 50S ribosomal subunit.

The protein localises to the plastid. The protein resides in the chloroplast. In terms of biological role, this protein binds specifically to 23S rRNA. The globular domain of the protein is located near the polypeptide exit tunnel on the outside of the subunit, while an extended beta-hairpin is found that lines the wall of the exit tunnel in the center of the 70S ribosome. The chain is Large ribosomal subunit protein uL22c (rpl22) from Angiopteris evecta (Mule's foot fern).